Consider the following 353-residue polypeptide: Uroporphyrinogen decarboxylase (353 aa).

Substrate contacts are provided by residues 30–34 (RQAGR), aspartate 79, tyrosine 154, serine 209, and histidine 332.

It belongs to the uroporphyrinogen decarboxylase family. Homodimer.

Its subcellular location is the cytoplasm. It carries out the reaction uroporphyrinogen III + 4 H(+) = coproporphyrinogen III + 4 CO2. It participates in porphyrin-containing compound metabolism; protoporphyrin-IX biosynthesis; coproporphyrinogen-III from 5-aminolevulinate: step 4/4. In terms of biological role, catalyzes the decarboxylation of four acetate groups of uroporphyrinogen-III to yield coproporphyrinogen-III. This chain is Uroporphyrinogen decarboxylase, found in Mycolicibacterium smegmatis (strain ATCC 700084 / mc(2)155) (Mycobacterium smegmatis).